The sequence spans 118 residues: Large ribosomal subunit protein bL19 (118 aa).

Belongs to the bacterial ribosomal protein bL19 family.

Its function is as follows. This protein is located at the 30S-50S ribosomal subunit interface and may play a role in the structure and function of the aminoacyl-tRNA binding site. This is Large ribosomal subunit protein bL19 from Saccharophagus degradans (strain 2-40 / ATCC 43961 / DSM 17024).